Consider the following 1097-residue polypeptide: Mitochondrial distribution and morphology protein 34 (1097 aa).

Positions 1–198 (MSFNFKWPTF…LPGIIHRLSQ (198 aa)) constitute an SMP-LTD domain. Disordered regions lie at residues 204–305 (EAKS…PLHS), 317–343 (AAFP…SGFS), 390–427 (QSDD…LDAV), 480–520 (DDQP…TSSL), 556–600 (PEVD…SSRT), 645–675 (LDAE…RDLS), 716–817 (GQNA…SPGV), and 923–1097 (GSSA…AIRE). Residues 205–229 (AKSEKDKVKQKAEAEEPPARSREPT) are compositionally biased toward basic and acidic residues. The span at 252–263 (RKSHSKAKKHSR) shows a compositional bias: basic residues. Residues 274–283 (SPCQSPQRPR) show a composition bias toward low complexity. The span at 284 to 293 (QSPRRPRHVA) shows a compositional bias: basic residues. Over residues 406 to 416 (SSSHDGKHDEG) the composition is skewed to basic and acidic residues. Composition is skewed to low complexity over residues 508-519 (SSRSDRSACTSS) and 572-586 (GGTP…RFGS). The span at 662-675 (TNPTSRESSYRDLS) shows a compositional bias: polar residues. A compositionally biased stretch (low complexity) spans 759–779 (GMSATPARTRASAAASARSRP). A compositionally biased stretch (polar residues) spans 784-796 (YATSPPGDSSGWQ). Over residues 923 to 943 (GSSAASGTGTTSGSSQTGANA) the composition is skewed to low complexity. Polar residues predominate over residues 1004-1024 (SNKPNNTSTGQGEDSQDNSAA). The span at 1045–1059 (ASGSSASSAITDSSS) shows a compositional bias: low complexity.

This sequence belongs to the MDM34 family. As to quaternary structure, component of the ER-mitochondria encounter structure (ERMES) or MDM complex, composed of MMM1, MDM10, MDM12 and MDM34.

The protein localises to the mitochondrion outer membrane. Functionally, component of the ERMES/MDM complex, which serves as a molecular tether to connect the endoplasmic reticulum (ER) and mitochondria. Components of this complex are involved in the control of mitochondrial shape and protein biogenesis, and function in nonvesicular lipid trafficking between the ER and mitochondria. MDM34 is required for the interaction of the ER-resident membrane protein MMM1 and the outer mitochondrial membrane-resident beta-barrel protein MDM10. The sequence is that of Mitochondrial distribution and morphology protein 34 from Mycosarcoma maydis (Corn smut fungus).